Here is a 387-residue protein sequence, read N- to C-terminus: Phosphoglycerate kinase (387 aa).

Substrate contacts are provided by residues 21-23, arginine 36, 59-62, arginine 113, and arginine 146; these read DLN and HLGR. ATP contacts are provided by residues lysine 197, glutamate 314, and 340–343; that span reads GGDT.

The protein belongs to the phosphoglycerate kinase family. In terms of assembly, monomer.

Its subcellular location is the cytoplasm. The enzyme catalyses (2R)-3-phosphoglycerate + ATP = (2R)-3-phospho-glyceroyl phosphate + ADP. It functions in the pathway carbohydrate degradation; glycolysis; pyruvate from D-glyceraldehyde 3-phosphate: step 2/5. This chain is Phosphoglycerate kinase, found in Yersinia pestis bv. Antiqua (strain Antiqua).